Reading from the N-terminus, the 145-residue chain is Putative BCoR-like protein 2 (145 aa).

Residues 1 to 27 (MKEKLSKKRAEVKGNRSWLEEFLKPSD) are compositionally biased toward basic and acidic residues. Residues 1–58 (MKEKLSKKRAEVKGNRSWLEEFLKPSDNEEGPPPKNKVLSNNASSQKPTHSSCIPLLR) are disordered. Residues 38 to 52 (VLSNNASSQKPTHSS) are compositionally biased toward polar residues.

Belongs to the BCOR family.

This chain is Putative BCoR-like protein 2 (BCORP1), found in Homo sapiens (Human).